The primary structure comprises 343 residues: Phosphoglycerate mutase-like protein 2 (343 aa).

The N-terminal 35 residues, 1–35 (MIHQSMTSNLSFYISSVSHLSSPLPSLSRLSLRCC), are a transit peptide targeting the chloroplast. The active-site Tele-phosphohistidine intermediate is His-65. Glu-177 (proton donor/acceptor) is an active-site residue. A disordered region spans residues 322–343 (MTNYPGTILTGEDASSDIADQK).

This sequence belongs to the phosphoglycerate mutase family.

Its subcellular location is the plastid. The protein resides in the chloroplast. May play a role in carbohydrates metabolism. The sequence is that of Phosphoglycerate mutase-like protein 2 from Arabidopsis thaliana (Mouse-ear cress).